The chain runs to 132 residues: uncharacterized protein (132 aa).

Residues 1–69 (MNIGEAAKKS…LDEVGKLLTL (69 aa)) enclose the HTH merR-type domain. The H-T-H motif DNA-binding region spans 4 to 23 (GEAAKKSGLTPKMIRYYESI).

The protein localises to the cytoplasm. This is an uncharacterized protein from Pseudomonas aeruginosa (strain ATCC 15692 / DSM 22644 / CIP 104116 / JCM 14847 / LMG 12228 / 1C / PRS 101 / PAO1).